A 326-amino-acid polypeptide reads, in one-letter code: Protein FAM50 homolog (326 aa).

The disordered stretch occupies residues 76–112 (EISNRDLQVARGASSSTSLAKDSQEAREKEEHVAKHT). Residues 97–109 (DSQEAREKEEHVA) are compositionally biased toward basic and acidic residues.

Belongs to the FAM50 family.

The polypeptide is Protein FAM50 homolog (Caenorhabditis briggsae).